The primary structure comprises 36 residues: Gloverin (36 aa).

It is found in the secreted. Antibacterial protein. This is Gloverin from Heliothis virescens (Tobacco budworm moth).